A 660-amino-acid chain; its full sequence is Acyl-coenzyme A oxidase acox-1.3 (660 aa).

Residues 146–149 (YAQT), 154–155 (GT), and Gly188 contribute to the FAD site. Substrate is bound by residues 282–285 (KIGY) and Arg292. Residues Arg317 and 337–340 (QQHR) each bind FAD. Residues His339, Ser389, His393, and Gln401 each coordinate ATP. A substrate-binding site is contributed by 430 to 431 (YE). Glu431 serves as the catalytic Proton acceptor. Glu433 contributes to the FAD binding site. ATP-binding positions include 524-527 (RASR) and Tyr572. The Microbody targeting signal signature appears at 658–660 (AKL).

Belongs to the acyl-CoA oxidase family. Forms a heterodimer with acox-1.1; the interaction may be important for the stability of acox-1.3. Requires FAD as cofactor.

It localises to the peroxisome. It carries out the reaction asc-C7-CoA + O2 = asc-DeltaC7-CoA + H2O2. It participates in lipid metabolism; peroxisomal fatty acid beta-oxidation. Its activity is regulated as follows. Activated by ATP. ATP binding leads to a conformational change that promotes FAD cofactor binding and enzyme activity. ATP binding likely occurs during acox-1.3 folding and/or dimer formation. Involved in the first step of peroxisomal beta-oxidation by catalyzing the desaturation of fatty acid-derived side chains of ascaroside pheromones, which regulates development and behavior. Specifically, shortens ascarosides with a 7-carbon side chain (asc-C7). Does not catalyze the desaturation of fatty acids or hydroxylated fatty acids. Involved in the biosynthesis of asc-C6-MK (daumone 2) and asc-delta-C9 (daumone 3) but not asc-C7 (daumone 1); daumones are pheromones produced during unfavourable growth conditions which promote entry into the dauer stage. The sequence is that of Acyl-coenzyme A oxidase acox-1.3 from Caenorhabditis elegans.